A 183-amino-acid chain; its full sequence is Capsid protein (183 aa).

Positions 136-183 (NAPILSTLPETTVVRRRGRSPRRRTPSPRRRRSQSPRRRRSQSRESQC) are disordered. Over residues 149–176 (VRRRGRSPRRRTPSPRRRRSQSPRRRRS) the composition is skewed to basic residues. Phosphoserine; by host is present on residues S155, S162, and S170. The 1; half-length repeat unit spans residues 155 to 161 (SPRRRTP). The segment at 155 to 177 (SPRRRTPSPRRRRSQSPRRRRSQ) is 3 X 8 AA repeats of S-P-R-R-R-[PR]-S-Q. Positions 158-175 (RRTPSPRRRRSQSPRRRR) match the Bipartite nuclear localization signal motif. A run of 2 repeats spans residues 162–169 (SPRRRRSQ) and 170–177 (SPRRRRSQ). Residues 177-183 (QSRESQC) form an RNA binding region.

This sequence belongs to the orthohepadnavirus core antigen family. Homodimerizes, then multimerizes. Interacts with cytosol exposed regions of viral L glycoprotein present in the reticulum-to-Golgi compartment. Interacts with human FLNB. Phosphorylated form interacts with host importin alpha; this interaction depends on the exposure of the NLS, which itself depends upon genome maturation and/or phosphorylation of the capsid protein. Interacts with host NUP153. Phosphorylated by host SRPK1, SRPK2, and maybe protein kinase C or GAPDH. Phosphorylation is critical for pregenomic RNA packaging. Protein kinase C phosphorylation is stimulated by HBx protein and may play a role in transport of the viral genome to the nucleus at the late step during the viral replication cycle.

Its subcellular location is the virion. The protein localises to the host cytoplasm. Its function is as follows. Self assembles to form an icosahedral capsid. Most capsids appear to be large particles with an icosahedral symmetry of T=4 and consist of 240 copies of capsid protein, though a fraction forms smaller T=3 particles consisting of 180 capsid proteins. Entering capsids are transported along microtubules to the nucleus. Phosphorylation of the capsid is thought to induce exposure of nuclear localization signal in the C-terminal portion of the capsid protein that allows binding to the nuclear pore complex via the importin (karyopherin-) alpha and beta. Capsids are imported in intact form through the nuclear pore into the nuclear basket, where it probably binds NUP153. Only capsids that contain the mature viral genome can release the viral DNA and capsid protein into the nucleoplasm. Immature capsids get stuck in the basket. Capsids encapsulate the pre-genomic RNA and the P protein. Pre-genomic RNA is reverse-transcribed into DNA while the capsid is still in the cytoplasm. The capsid can then either be directed to the nucleus, providing more genomes for transcription, or bud through the endoplasmic reticulum to provide new virions. The sequence is that of Capsid protein from Hepatitis B virus genotype D subtype ayw (isolate France/Tiollais/1979) (HBV-D).